The primary structure comprises 550 residues: Solute carrier family 22 member 6 (550 aa).

At Met-1 to Gln-9 the chain is on the cytoplasmic side. The chain crosses the membrane as a helical span at residues Val-10–Leu-30. Over Met-31–Gln-135 the chain is Extracellular. Residues Asn-56, Asn-92, and Asn-113 are each glycosylated (N-linked (GlcNAc...) asparagine). A helical membrane pass occupies residues Leu-136 to Ala-156. The Cytoplasmic portion of the chain corresponds to Asp-157–Val-164. A helical transmembrane segment spans residues Leu-165–Ile-187. The Extracellular segment spans residues Tyr-188–Ala-190. A helical membrane pass occupies residues Phe-191 to Trp-213. Topologically, residues Met-214–Thr-224 are cytoplasmic. The helical transmembrane segment at Leu-225 to Pro-245 threads the bilayer. Over His-246–Arg-248 the chain is Extracellular. The helical transmembrane segment at His-249–Ile-269 threads the bilayer. Residues Glu-270–His-337 lie on the Cytoplasmic side of the membrane. The helical transmembrane segment at Leu-338–Met-358 threads the bilayer. Over Asp-359–Tyr-368 the chain is Extracellular. The chain crosses the membrane as a helical span at residues Leu-369–Ile-389. Residues Asn-390–Arg-395 are Cytoplasmic-facing. The helical transmembrane segment at Pro-396–Pro-416 threads the bilayer. The Extracellular portion of the chain corresponds to Gln-417–Ser-425. Residues Leu-426–Gly-446 traverse the membrane as a helical segment. Over Glu-447–Thr-456 the chain is Cytoplasmic. A helical membrane pass occupies residues Gly-457–Met-477. At Thr-478 to Ser-484 the chain is on the extracellular side. Residues Val-485 to Pro-505 traverse the membrane as a helical segment. Over Glu-506–Leu-550 the chain is Cytoplasmic. Positions Pro-513–Leu-550 are disordered.

This sequence belongs to the major facilitator (TC 2.A.1) superfamily. Organic cation transporter (TC 2.A.1.19) family. In terms of processing, glycosylated. Glycosylation is necessary for proper targeting of the transporter to the plasma membrane. As to expression, expressed in kidney; in the basolateral membrane of the proximal tubule.

The protein localises to the basolateral cell membrane. It is found in the basal cell membrane. It carries out the reaction (6R)-L-erythro-5,6,7,8-tetrahydrobiopterin(out) + a dicarboxylate(in) = (6R)-L-erythro-5,6,7,8-tetrahydrobiopterin(in) + a dicarboxylate(out). The catalysed reaction is L-erythro-7,8-dihydrobiopterin(out) + a dicarboxylate(in) = L-erythro-7,8-dihydrobiopterin(in) + a dicarboxylate(out). The enzyme catalyses L-sepiapterin(out) + a dicarboxylate(in) = L-sepiapterin(in) + a dicarboxylate(out). It catalyses the reaction prostaglandin F2alpha(out) + a dicarboxylate(in) = prostaglandin F2alpha(in) + a dicarboxylate(out). It carries out the reaction prostaglandin E2(out) + a dicarboxylate(in) = prostaglandin E2(in) + a dicarboxylate(out). The catalysed reaction is 3',5'-cyclic AMP(out) + a dicarboxylate(in) = 3',5'-cyclic AMP(in) + a dicarboxylate(out). The enzyme catalyses 3',5'-cyclic GMP(out) + a dicarboxylate(in) = 3',5'-cyclic GMP(in) + a dicarboxylate(out). It catalyses the reaction urate(out) + a dicarboxylate(in) = urate(in) + a dicarboxylate(out). It carries out the reaction kynurenate(out) + glutarate(in) = kynurenate(in) + glutarate(out). The catalysed reaction is (indol-3-yl)acetate(out) + a dicarboxylate(in) = (indol-3-yl)acetate(in) + a dicarboxylate(out). The enzyme catalyses indoxyl sulfate(out) + a dicarboxylate(in) = indoxyl sulfate(in) + a dicarboxylate(out). It catalyses the reaction N-benzoylglycine(out) + a dicarboxylate(in) = N-benzoylglycine(in) + a dicarboxylate(out). It carries out the reaction 3-carboxy-4-methyl-5-propyl-2-furanpropanoate(out) + a dicarboxylate(in) = 3-carboxy-4-methyl-5-propyl-2-furanpropanoate(in) + a dicarboxylate(out). Secondary active transporter that functions as a Na(+)-independent organic anion (OA)/dicarboxylate antiporter where the uptake of one molecule of OA into the cell is coupled with an efflux of one molecule of intracellular dicarboxylate such as 2-oxoglutarate or glutarate. Mediates the uptake of OA across the basolateral side of proximal tubule epithelial cells, thereby contributing to the renal elimination of endogenous OA from the systemic circulation into the urine. Functions as a biopterin transporters involved in the uptake and the secretion of coenzymes tetrahydrobiopterin (BH4), dihydrobiopterin (BH2) and sepiapterin to urine, thereby determining baseline levels of blood biopterins. Transports prostaglandin E2 (PGE2) and prostaglandin F2-alpha (PGF2-alpha) and may contribute to their renal excretion. Also mediates the uptake of cyclic nucleotides such as cAMP and cGMP. Involved in the transport of neuroactive tryptophan metabolites kynurenate (KYNA) and xanthurenate (XA) and may contribute to their secretion from the brain. May transport glutamate. Also involved in the disposition of uremic toxins and potentially toxic xenobiotics by the renal organic anion secretory pathway, helping reduce their undesired toxicological effects on the body. Uremic toxins include the indoxyl sulfate (IS), hippurate/N-benzoylglycine (HA), indole acetate (IA), 3-carboxy-4- methyl-5-propyl-2-furanpropionate (CMPF) and urate. Xenobiotics include the mycotoxin ochratoxin (OTA). May also contribute to the transport of organic compounds in testes across the blood-testis-barrier. This is Solute carrier family 22 member 6 from Macaca fascicularis (Crab-eating macaque).